Consider the following 394-residue polypeptide: Probable fatty acid methyltransferase (394 aa).

Residues 128-129, 163-171, and 189-194 each bind S-adenosyl-L-methionine; these read YS, LLDVGCGWG, and TLSKEQ. Residue cysteine 358 is part of the active site.

It belongs to the CFA/CMAS family.

This chain is Probable fatty acid methyltransferase, found in Pseudomonas putida (Arthrobacter siderocapsulatus).